An 831-amino-acid chain; its full sequence is Valine--tRNA ligase (831 aa).

The short motif at proline 77 to histidine 87 is the 'HIGH' region element. The 'KMSKS' region motif lies at arginine 564 to serine 568. Lysine 567 is an ATP binding site.

Belongs to the class-I aminoacyl-tRNA synthetase family. ValS type 2 subfamily.

The protein localises to the cytoplasm. The catalysed reaction is tRNA(Val) + L-valine + ATP = L-valyl-tRNA(Val) + AMP + diphosphate. Catalyzes the attachment of valine to tRNA(Val). As ValRS can inadvertently accommodate and process structurally similar amino acids such as threonine, to avoid such errors, it has a 'posttransfer' editing activity that hydrolyzes mischarged Thr-tRNA(Val) in a tRNA-dependent manner. This is Valine--tRNA ligase from Sulfolobus acidocaldarius (strain ATCC 33909 / DSM 639 / JCM 8929 / NBRC 15157 / NCIMB 11770).